A 722-amino-acid polypeptide reads, in one-letter code: ORC ubiquitin ligase 1 (722 aa).

The RING-type; degenerate zinc finger occupies 18 to 56; the sequence is CHICLGKVRQPVVCTNNHVFCSICIDLWLKNNSQCPACR. Coiled-coil stretches lie at residues 87–129 and 157–267; these read LRKT…TILD and VVEW…KEDV. Position 210 is a phosphoserine (serine 210). The disordered stretch occupies residues 273 to 359; that stretch reads RAPSADSKGP…RLGARETPMD (87 aa). Low complexity predominate over residues 302–319; the sequence is AGSASASHLASPSSSRLA. Polar residues predominate over residues 323–338; that stretch reads SVRQESTSRTEPNCPQ. Over residues 339–359 the composition is skewed to basic and acidic residues; it reads NKDRYPKPTEPRLGARETPMD. A phosphoserine mark is found at serine 522, serine 549, serine 557, serine 564, and serine 566. The segment covering 541 to 555 has biased composition (polar residues); it reads MSESDNSKSPCNNGF. Disordered regions lie at residues 541-585 and 691-722; these read MSES…GSKL and VPEK…ATKS. Residues 571-581 are compositionally biased toward basic and acidic residues; it reads EFLEEPDKLQE. A compositionally biased stretch (polar residues) spans 698–722; sequence NGNQSTKRKIQSSLANASPSKATKS. A phosphoserine mark is found at serine 715 and serine 717.

In terms of assembly, associates with ORC complex. Binds to chromatin; association is cell cycle-regulated, absent from mitotic chromosomes, is associated with chromatin from G1 and partially released from chromatin from mid S-phase. Auto-ubiquitinated.

It localises to the chromosome. It carries out the reaction S-ubiquitinyl-[E2 ubiquitin-conjugating enzyme]-L-cysteine + [acceptor protein]-L-lysine = [E2 ubiquitin-conjugating enzyme]-L-cysteine + N(6)-ubiquitinyl-[acceptor protein]-L-lysine.. Functionally, E3 ubiquitin ligase essential for DNA replication origin activation during S phase. Acts as a replication origin selector which selects the origins to be fired and catalyzes the multi-mono-ubiquitination of a subset of chromatin-bound ORC3 and ORC5 during S-phase. The chain is ORC ubiquitin ligase 1 from Mus musculus (Mouse).